A 287-amino-acid polypeptide reads, in one-letter code: uncharacterized protein (287 aa).

Catalysis depends on charge relay system residues threonine 43 and tyrosine 104. Residue tyrosine 130 is the Proton donor of the active site. The active-site Schiff-base intermediate with substrate is lysine 158.

Belongs to the DapA family. Homotetramer.

The protein resides in the cytoplasm. This is an uncharacterized protein from Pyrococcus horikoshii (strain ATCC 700860 / DSM 12428 / JCM 9974 / NBRC 100139 / OT-3).